Consider the following 423-residue polypeptide: Ferrochelatase, mitochondrial (423 aa).

Residues 1–54 (MRSLGANMAAALRAAGVLLRDPLASSSWRVCQPWRWKSGAAAAAVTTETAQHAQ) constitute a mitochondrion transit peptide. N6-acetyllysine is present on lysine 57. Arginine 115, tyrosine 123, and serine 130 together coordinate protoporphyrin IX. The residue at position 138 (lysine 138) is an N6-succinyllysine. Residue cysteine 196 coordinates [2Fe-2S] cluster. Active-site residues include histidine 230 and aspartate 383. Residues cysteine 403, cysteine 406, and cysteine 411 each coordinate [2Fe-2S] cluster. An N6-acetyllysine; alternate modification is found at lysine 415. Lysine 415 is modified (N6-succinyllysine; alternate).

This sequence belongs to the ferrochelatase family. Homodimer. Homotetramer. Interacts with PGRMC1; the interaction results in decreased FECH activity. Interacts with ABCB10 and SLC25A37; this interaction forms an oligomeric complex. Forms a complex with ABCB7 and ABCB10, where a dimeric FECH bridges ABCB7 and ABCB10 homodimers; this complex may be required for cellular iron homeostasis, mitochondrial function and heme biosynthesis. Interacts with ABCB7 and ABCB10. The cofactor is [2Fe-2S] cluster.

The protein localises to the mitochondrion inner membrane. The catalysed reaction is heme b + 2 H(+) = protoporphyrin IX + Fe(2+). The protein operates within porphyrin-containing compound metabolism; protoheme biosynthesis; protoheme from protoporphyrin-IX: step 1/1. With respect to regulation, inhibited by nitric oxide (NO). The 2Fe-2S cluster could act as a NO sensor. In terms of biological role, catalyzes the ferrous insertion into protoporphyrin IX and participates in the terminal step in the heme biosynthetic pathway. In Homo sapiens (Human), this protein is Ferrochelatase, mitochondrial.